The chain runs to 262 residues: MPAVKVVERTPLFLKAVVEGAYPSLVNSLRRVIISELPVMAIDTVIVVNNTSVMYDEMLAHRLGLIPLTTPLQSLPPIEDCESGLADPSECTVRFTLQVNADGEVTVYSGDLVSERPDVVPVHKDIPIVKLVKGQSIVLEAYAKLGRARGHAKWQAALASYYYYPRVEVRDESCRERCREVCRDLTNPLECTFNKAMTCRDLCGDKLHVDWERNKYVFWVESFGNYDVDTALREAFRILKRKYSLFLDALARKSSSAAEAKL.

This sequence belongs to the archaeal Rpo3/eukaryotic RPB3 RNA polymerase subunit family. As to quaternary structure, part of the RNA polymerase complex.

It localises to the cytoplasm. It catalyses the reaction RNA(n) + a ribonucleoside 5'-triphosphate = RNA(n+1) + diphosphate. In terms of biological role, DNA-dependent RNA polymerase (RNAP) catalyzes the transcription of DNA into RNA using the four ribonucleoside triphosphates as substrates. The protein is DNA-directed RNA polymerase subunit Rpo3 of Pyrobaculum neutrophilum (strain DSM 2338 / JCM 9278 / NBRC 100436 / V24Sta) (Thermoproteus neutrophilus).